The following is a 256-amino-acid chain: Protein FixA (256 aa).

This sequence belongs to the ETF beta-subunit/FixA family. As to quaternary structure, heterodimer of FixA and FixB.

Its pathway is amine and polyamine metabolism; carnitine metabolism. In terms of biological role, required for anaerobic carnitine reduction. May bring reductant to CaiA. The chain is Protein FixA from Escherichia fergusonii (strain ATCC 35469 / DSM 13698 / CCUG 18766 / IAM 14443 / JCM 21226 / LMG 7866 / NBRC 102419 / NCTC 12128 / CDC 0568-73).